A 443-amino-acid chain; its full sequence is Transcriptional regulatory protein ZraR (443 aa).

A Response regulatory domain is found at 7-121 (DILVVDDDIS…KLQLTLSEAL (115 aa)). D56 is modified (4-aspartylphosphate). Residues 141-370 (MVGDSPAMRA…LENAVERAVV (230 aa)) form the Sigma-54 factor interaction domain. 4 residues coordinate ATP: G172, T173, R329, and R359. The segment at residues 423-442 (KTEAARRLGITRKTLLAKLS) is a DNA-binding region (H-T-H motif).

In terms of processing, phosphorylated by ZraS.

The protein resides in the cytoplasm. With respect to regulation, activity of the ZraS/ZraR two-component system is repressed by the zinc-bound form of ZraP, which probably interacts with the periplasmic region of ZraS. Functionally, part of the Zra signaling pathway, an envelope stress response (ESR) system composed of the periplasmic accessory protein ZraP, the histidine kinase ZraS and the transcriptional regulator ZraR. The ZraPSR system contributes to antibiotic resistance and is important for membrane integrity in the presence of membrane-targeting biocides. ZraR is a member of the two-component regulatory system ZraS/ZraR. When activated by ZraS, acts in conjunction with sigma-54 to regulate the expression of zraP in the presence of high Zn(2+) or Pb(2+) concentrations. Also positively autoregulates the expression of the zraSR operon. This chain is Transcriptional regulatory protein ZraR (zraR), found in Klebsiella oxytoca.